The sequence spans 390 residues: Phosphopentomutase (390 aa).

Positions 9, 283, 288, 324, 325, and 336 each coordinate Mn(2+).

The protein belongs to the phosphopentomutase family. Mn(2+) serves as cofactor.

It localises to the cytoplasm. The catalysed reaction is 2-deoxy-alpha-D-ribose 1-phosphate = 2-deoxy-D-ribose 5-phosphate. It catalyses the reaction alpha-D-ribose 1-phosphate = D-ribose 5-phosphate. It participates in carbohydrate degradation; 2-deoxy-D-ribose 1-phosphate degradation; D-glyceraldehyde 3-phosphate and acetaldehyde from 2-deoxy-alpha-D-ribose 1-phosphate: step 1/2. In terms of biological role, isomerase that catalyzes the conversion of deoxy-ribose 1-phosphate (dRib-1-P) and ribose 1-phosphate (Rib-1-P) to deoxy-ribose 5-phosphate (dRib-5-P) and ribose 5-phosphate (Rib-5-P), respectively. This Thermotoga petrophila (strain ATCC BAA-488 / DSM 13995 / JCM 10881 / RKU-1) protein is Phosphopentomutase.